The sequence spans 436 residues: FAD-dependent monooxygenase pigN (436 aa).

Residues glutamate 40, glycine 53, and arginine 118 each contribute to the FAD site. The active site involves arginine 200. Residues aspartate 316 and alanine 329 each contribute to the FAD site.

The protein belongs to the paxM FAD-dependent monooxygenase family. FAD is required as a cofactor.

It functions in the pathway secondary metabolite biosynthesis. Functionally, FAD-dependent monooxygenase; part of the gene cluster that mediates the biosynthesis of azaphilone pigments (MonAzPs), a complex mixture of compounds with a common azaphilone skeleton very widely used as food colorants. Within the pathway, pigN hydroxylates the benzaldehyde M7PKS-1 intermediate at C-4 to form the pyran ring. The first step of the pathway is performed by the nrPKS pigA that forms the hexaketide precursor from successive condensations of five malonyl-CoA units, with a simple acetyl-CoA starter unit. The role of esterase pigG is not clear, but it may play at most a supplementary role in the formation of the benzaldehyde produced by the pigA nrPKS. This very reactive benzaldehyde is intercepted by the pigC ketoreductase that to provide the first stable enzyme-free MonAzPs intermediate, 6-(4-hydroxy-2-oxopentyl)-3-methyl-2,4-dioxocyclohexane carbaldehyde, also known as M7PKS-1. The FAD-dependent monooxygenase pigN hydroxylates M7PKS-1 at C-4, which triggers the formation of the pyran ring. PigJ, pigK and pigD are involved in the acetylation of the pyran ring. PigJ and pigK form the two subunits of a dedicated fungal FAS that produces the side chain fatty acyl moiety of MonAzPs and pigD transfers the fatty acyl chain to the C-4 alcohol. PigM and pigO are involved in the elimination of the omega-1 alcohol. PigM acts as an O-acetyltransferase that synthesizes the putative O-11 acetyl intermediate whereas pigO eliminates acetic acid to yield an intermediate with a C10(11) double bond. The dehydration of the C-11 alcohol followed by the reduction of the C6(7) double bond by the NAD(P)H-dependent oxidoreductase pigE increases the electrophilicity of the C-5 ketone of the resulting acyl benzopyran. This in turn sets up the C-5 ketone for an intramolecular Knoevenagel aldol condensation with the C-20 enol of the side chain. This condensation affords the characteristic linear tricyclic carbon skeletons of the yellow pigments that serve as the common precursors for the classical yellow pigments monascin and ankaflavin, orange pigments rubopunctatin and monascorubrin, and red pigments ribropunctamine and monascorubramine. The FAD-dependent oxidoreductase pigF is especially invoved in the biosynthesis of orange and red pigments via desaturation of C6(7). This Monascus ruber (Mold) protein is FAD-dependent monooxygenase pigN.